Reading from the N-terminus, the 1316-residue chain is DNA-directed RNA polymerase subunit beta' (1316 aa).

4 residues coordinate Zn(2+): Cys60, Cys62, Cys75, and Cys78. The Mg(2+) site is built by Asp535, Asp537, and Asp539. Cys891, Cys968, Cys975, and Cys978 together coordinate Zn(2+).

It belongs to the RNA polymerase beta' chain family. In terms of assembly, the RNAP catalytic core consists of 2 alpha, 1 beta, 1 beta' and 1 omega subunit. When a sigma factor is associated with the core the holoenzyme is formed, which can initiate transcription. It depends on Mg(2+) as a cofactor. Requires Zn(2+) as cofactor.

It catalyses the reaction RNA(n) + a ribonucleoside 5'-triphosphate = RNA(n+1) + diphosphate. Functionally, DNA-dependent RNA polymerase catalyzes the transcription of DNA into RNA using the four ribonucleoside triphosphates as substrates. The polypeptide is DNA-directed RNA polymerase subunit beta' (Mycobacterium bovis (strain BCG / Pasteur 1173P2)).